A 204-amino-acid chain; its full sequence is tRNA (pseudouridine(54)-N(1))-methyltransferase (204 aa).

Residues Leu130, Gly157, 180–185 (LSPLEL), and Cys190 contribute to the S-adenosyl-L-methionine site.

The protein belongs to the methyltransferase superfamily. TrmY family. Homodimer.

It is found in the cytoplasm. It catalyses the reaction pseudouridine(54) in tRNA + S-adenosyl-L-methionine = N(1)-methylpseudouridine(54) in tRNA + S-adenosyl-L-homocysteine + H(+). Specifically catalyzes the N1-methylation of pseudouridine at position 54 (Psi54) in tRNAs. This Methanococcus aeolicus (strain ATCC BAA-1280 / DSM 17508 / OCM 812 / Nankai-3) protein is tRNA (pseudouridine(54)-N(1))-methyltransferase.